The sequence spans 680 residues: DNA ligase (680 aa).

NAD(+) contacts are provided by residues aspartate 35–aspartate 39, serine 84–leucine 85, and glutamate 115. Catalysis depends on lysine 117, which acts as the N6-AMP-lysine intermediate. NAD(+) contacts are provided by arginine 138, glutamate 174, lysine 291, and lysine 315. Positions 419, 422, 437, and 442 each coordinate Zn(2+). One can recognise a BRCT domain in the interval asparagine 601–serine 680.

This sequence belongs to the NAD-dependent DNA ligase family. LigA subfamily. Mg(2+) is required as a cofactor. The cofactor is Mn(2+).

It carries out the reaction NAD(+) + (deoxyribonucleotide)n-3'-hydroxyl + 5'-phospho-(deoxyribonucleotide)m = (deoxyribonucleotide)n+m + AMP + beta-nicotinamide D-nucleotide.. Its function is as follows. DNA ligase that catalyzes the formation of phosphodiester linkages between 5'-phosphoryl and 3'-hydroxyl groups in double-stranded DNA using NAD as a coenzyme and as the energy source for the reaction. It is essential for DNA replication and repair of damaged DNA. This chain is DNA ligase, found in Dehalococcoides mccartyi (strain ATCC BAA-2100 / JCM 16839 / KCTC 5957 / BAV1).